A 160-amino-acid polypeptide reads, in one-letter code: uncharacterized protein (160 aa).

The segment at 8–46 (CAVCLDFFVEPCIIECGHSYCRFCIESHLNINEKCPLCR) adopts an RING-type zinc-finger fold.

This is an uncharacterized protein from Caenorhabditis elegans.